A 200-amino-acid polypeptide reads, in one-letter code: HTH-type transcriptional regulator BetI (200 aa).

The 61-residue stretch at 8–68 (SIRKQQLIQA…AAMRHIQYQL (61 aa)) folds into the HTH tetR-type domain. A DNA-binding region (H-T-H motif) is located at residues 31–50 (SIALIARKAGVSNGIISHYF).

It participates in amine and polyamine biosynthesis; betaine biosynthesis via choline pathway [regulation]. Its function is as follows. Repressor involved in the biosynthesis of the osmoprotectant glycine betaine. It represses transcription of the choline transporter BetT and the genes of BetAB involved in the synthesis of glycine betaine. This is HTH-type transcriptional regulator BetI from Proteus mirabilis (strain HI4320).